The sequence spans 273 residues: Protein GMH1 (273 aa).

A disordered region spans residues 1–33 (MSYLPTYSNDLPAGPQGQRRRNNGNENDARQGY). Ser2 carries the N-acetylserine modification. The Cytoplasmic segment spans residues 2–89 (SYLPTYSNDL…QTKNQWARDD (88 aa)). Residues 90–110 (PSFFIFQIALISLSSIIWSIY) form a helical membrane-spanning segment. At 111–134 (NSGFNNDSDMGALSIIGHFFKSLV) the chain is on the lumenal side. The helical transmembrane segment at 135 to 155 (MMVILDFFIFGFIMATIFYLL) threads the bilayer. Topologically, residues 156–175 (LNRSHFKFKSSQNSVVEWAY) are cytoplasmic. The helical transmembrane segment at 176–196 (CFDVHCNSFLIILLCLYFIQF) threads the bilayer. The Lumenal segment spans residues 197–216 (LLLPIINLQNWISLLIGNSL). A helical membrane pass occupies residues 217-237 (YCFAIGHYFILTFYGYNQLPF). Residues 238–242 (LKNLN) are Cytoplasmic-facing. A helical transmembrane segment spans residues 243-263 (FILLPTLGLSIIYLISLFGID). Residues 264–273 (LSKKLSFYNY) are Lumenal-facing.

This sequence belongs to the unc-50 family. Interacts with GEA1 and GEA2.

It localises to the golgi apparatus membrane. It is found in the endoplasmic reticulum membrane. This is Protein GMH1 (GMH1) from Saccharomyces cerevisiae (strain ATCC 204508 / S288c) (Baker's yeast).